The primary structure comprises 457 residues: ADP-dependent glucose/glucosamine kinase (457 aa).

Positions 5-457 constitute an ADPK domain; the sequence is TNWESLYEKA…SAFVSEFSLH (453 aa). D-glucose is bound by residues D37, E91, 115-116, and H179; that span reads GQ. E269 contributes to the Mg(2+) binding site. Position 295 (N295) interacts with ADP. E298 serves as a coordination point for Mg(2+). ADP-binding positions include 345–346, V432, and G442; that span reads HT. D443 contacts D-glucose. Residue D443 participates in Mg(2+) binding. D443 acts as the Proton acceptor in catalysis.

It belongs to the ADP-dependent glucokinase family. Mg(2+) serves as cofactor.

The protein resides in the cytoplasm. It catalyses the reaction D-glucose + ADP = D-glucose 6-phosphate + AMP + H(+). The enzyme catalyses D-glucosamine + ADP = D-glucosamine 6-phosphate + AMP + H(+). It functions in the pathway carbohydrate degradation; glycolysis. Its activity is regulated as follows. Inhibited by 8-bromoadenosine phosphate (8-Br-AMP). Functionally, catalyzes the ADP-dependent phosphorylation of D-glucose to D-glucose 6-phosphate and glucosamine to glucosamine 6-phosphate. This is ADP-dependent glucose/glucosamine kinase from Pyrococcus horikoshii (strain ATCC 700860 / DSM 12428 / JCM 9974 / NBRC 100139 / OT-3).